Here is a 192-residue protein sequence, read N- to C-terminus: Inosine triphosphate pyrophosphatase (192 aa).

An ITP-binding site is contributed by 10-15 (TGNANK). E46 serves as a coordination point for Mg(2+). ITP is bound by residues K58, 74–75 (DT), K91, 149–152 (FGWD), K172, and 177–178 (HR).

The protein belongs to the HAM1 NTPase family. Homodimer. The cofactor is Mg(2+). Requires Mn(2+) as cofactor.

The protein localises to the cytoplasm. It is found in the nucleus. It carries out the reaction ITP + H2O = IMP + diphosphate + H(+). The catalysed reaction is dITP + H2O = dIMP + diphosphate + H(+). The enzyme catalyses XTP + H2O = XMP + diphosphate + H(+). Its function is as follows. Pyrophosphatase that hydrolyzes non-canonical purine nucleotides such as inosine triphosphate (ITP), deoxyinosine triphosphate (dITP) or xanthosine 5'-triphosphate (XTP) to their respective monophosphate derivatives. The enzyme does not distinguish between the deoxy- and ribose forms. Probably excludes non-canonical purines from RNA and DNA precursor pools, thus preventing their incorporation into RNA and DNA and avoiding chromosomal lesions. The sequence is that of Inosine triphosphate pyrophosphatase from Puccinia graminis f. sp. tritici (strain CRL 75-36-700-3 / race SCCL) (Black stem rust fungus).